The sequence spans 186 residues: Elongation factor P (186 aa).

The protein belongs to the elongation factor P family.

It is found in the cytoplasm. The protein operates within protein biosynthesis; polypeptide chain elongation. Functionally, involved in peptide bond synthesis. Stimulates efficient translation and peptide-bond synthesis on native or reconstituted 70S ribosomes in vitro. Probably functions indirectly by altering the affinity of the ribosome for aminoacyl-tRNA, thus increasing their reactivity as acceptors for peptidyl transferase. This chain is Elongation factor P, found in Prochlorococcus marinus (strain MIT 9312).